The primary structure comprises 218 residues: Small ribosomal subunit protein uS3c (218 aa).

One can recognise a KH type-2 domain in the interval 47 to 118 (VQKNLKISSG…KLNITITRIA (72 aa)).

This sequence belongs to the universal ribosomal protein uS3 family. As to quaternary structure, part of the 30S ribosomal subunit.

It is found in the plastid. It localises to the chloroplast. This Daucus carota (Wild carrot) protein is Small ribosomal subunit protein uS3c (rps3).